The sequence spans 153 residues: Large ribosomal subunit protein uL13 (153 aa).

It belongs to the universal ribosomal protein uL13 family. Part of the 50S ribosomal subunit.

Functionally, this protein is one of the early assembly proteins of the 50S ribosomal subunit, although it is not seen to bind rRNA by itself. It is important during the early stages of 50S assembly. This is Large ribosomal subunit protein uL13 from Azorhizobium caulinodans (strain ATCC 43989 / DSM 5975 / JCM 20966 / LMG 6465 / NBRC 14845 / NCIMB 13405 / ORS 571).